A 424-amino-acid polypeptide reads, in one-letter code: Serine hydroxymethyltransferase (424 aa).

(6S)-5,6,7,8-tetrahydrofolate contacts are provided by residues Leu-126 and 130-132; that span reads GHL. Lys-235 bears the N6-(pyridoxal phosphate)lysine mark. A (6S)-5,6,7,8-tetrahydrofolate-binding site is contributed by 359-361; that stretch reads SPF.

The protein belongs to the SHMT family. As to quaternary structure, homodimer. Pyridoxal 5'-phosphate serves as cofactor.

It is found in the cytoplasm. The enzyme catalyses (6R)-5,10-methylene-5,6,7,8-tetrahydrofolate + glycine + H2O = (6S)-5,6,7,8-tetrahydrofolate + L-serine. It functions in the pathway one-carbon metabolism; tetrahydrofolate interconversion. It participates in amino-acid biosynthesis; glycine biosynthesis; glycine from L-serine: step 1/1. In terms of biological role, catalyzes the reversible interconversion of serine and glycine with tetrahydrofolate (THF) serving as the one-carbon carrier. This reaction serves as the major source of one-carbon groups required for the biosynthesis of purines, thymidylate, methionine, and other important biomolecules. Also exhibits THF-independent aldolase activity toward beta-hydroxyamino acids, producing glycine and aldehydes, via a retro-aldol mechanism. This chain is Serine hydroxymethyltransferase, found in Prochlorococcus marinus (strain MIT 9303).